The chain runs to 219 residues: Ras-related protein Rab-3B (219 aa).

At alanine 2 the chain carries N-acetylalanine. The GTP site is built by serine 31, serine 32, valine 33, glycine 34, lysine 35, threonine 36, serine 37, proline 49, and serine 53. Threonine 36 serves as a coordination point for Mg(2+). The Switch 1 signature appears at 45–58; the sequence is DTFTPAFVSTVGID. Mg(2+)-binding residues include threonine 54 and aspartate 77. Residues 78–96 carry the Switch 2 motif; that stretch reads TAGQERYRTITTAYYRGAM. Residue glycine 80 participates in GTP binding. A Phosphothreonine; by LRRK2 modification is found at threonine 86. Positions 135, 136, 138, 166, and 167 each coordinate GTP. A phosphoserine mark is found at serine 188 and serine 190. Residues cysteine 217 and cysteine 219 are each lipidated (S-geranylgeranyl cysteine). Cysteine 219 is subject to Cysteine methyl ester.

This sequence belongs to the small GTPase superfamily. Rab family. In terms of assembly, interacts with RIMS1, RIMS2, RPH3A and RPH3AL. The GTP-bound form interacts with GAS8/DRC4 (via coiled-coil domains). Interacts with GDI2, CHM and CHML; phosphorylation at Thr-86 disrupts these interactions. Interacts with MADD (via uDENN domain); the GTP-bound form is preferred for interaction. Mg(2+) serves as cofactor. In terms of processing, phosphorylation of Thr-86 in the switch II region by LRRK2 prevents the association of RAB regulatory proteins, including CHM, CHML and RAB GDP dissociation inhibitor GDI2. Abundantly expressed in testis, lung and brain.

It localises to the cell membrane. It is found in the golgi apparatus. The enzyme catalyses GTP + H2O = GDP + phosphate + H(+). Its activity is regulated as follows. Regulated by guanine nucleotide exchange factors (GEFs) which promote the exchange of bound GDP for free GTP. Regulated by GTPase activating proteins (GAPs) which increase the GTP hydrolysis activity. Inhibited by GDP dissociation inhibitors (GDIs) which prevent Rab-GDP dissociation. Functionally, the small GTPases Rab are key regulators of intracellular membrane trafficking, from the formation of transport vesicles to their fusion with membranes. Rabs cycle between an inactive GDP-bound form and an active GTP-bound form that is able to recruit to membranes different sets of downstream effectors directly responsible for vesicle formation, movement, tethering and fusion. The polypeptide is Ras-related protein Rab-3B (Mus musculus (Mouse)).